The chain runs to 20 residues: Equinatoxin-1 (20 aa).

A plays an important role in the hemolytic activity region spans residues 3 to 12; that stretch reads AVAGAVIEGA. Residues 11 to 20 form an N-terminal region region; the sequence is GASLTFNVLQ.

This sequence belongs to the actinoporin family. Sea anemone subfamily. Octamer or nonamer in membranes. Monomer in the soluble state.

The protein localises to the secreted. Its subcellular location is the nematocyst. It is found in the target cell membrane. Its function is as follows. Pore-forming protein that forms cations-selective hydrophilic pores of around 1 nm and causes cardiac stimulation and cytolysis. Pore formation is a multi-step process that involves specific recognition of membrane sphingomyelin (but neither cholesterol nor phosphatidylcholine) using aromatic rich region and adjacent phosphocholine (POC) binding site, firm binding to the membrane (mainly driven by hydrophobic interactions) accompanied by the transfer of the N-terminal region to the lipid-water interface and finally pore formation after oligomerization of monomers. Cytolytic effects include red blood cells hemolysis, platelet aggregation and lysis, cytotoxic and cytostatic effects on fibroblasts. Lethality in mammals has been ascribed to severe vasospasm of coronary vessels, cardiac arrhythmia, and inotropic effects. The polypeptide is Equinatoxin-1 (Actinia equina (Beadlet anemone)).